The following is a 70-amino-acid chain: Turripeptide Lol9.1 (70 aa).

Positions 1–20 (MKVYCLLLVLLVGLVSQAHG) are cleaved as a signal peptide. The Kazal-like domain occupies 21 to 70 (KPTKRCLSVCSAEYEPVCGSDGKTYANKCHLMTEACWSPTSITLVHEGKC). 3 disulfide bridges follow: C26/C56, C30/C49, and C38/C70.

Belongs to the conopeptide P-like superfamily. As to expression, expressed by the venom duct.

It localises to the secreted. Its function is as follows. Acts as a neurotoxin by inhibiting an ion channel. May also act as a serine protease inhibitor, since it possess the kazal serine protease inhibitor signature. The chain is Turripeptide Lol9.1 from Iotyrris olangoensis (Sea snail).